Reading from the N-terminus, the 266-residue chain is Interleukin-1 beta (266 aa).

A propeptide spanning residues 1 to 113 (MATVPEPINE…ETSSDELLCD (113 aa)) is cleaved from the precursor.

Belongs to the IL-1 family. In terms of assembly, monomer. In its precursor form, weakly interacts with full-length MEFV; the mature cytokine does not interact at all. Interacts with integrins ITGAV:ITGBV and ITGA5:ITGB1; integrin-binding is required for IL1B signaling. Interacts with cargo receptor TMED10; the interaction is direct and is required for the secretion of IL1B mature form. Interacts with HSP90AB1; the interaction facilitates cargo translocation into the ERGIC. Interacts with HSP90B1; the interaction facilitates cargo translocation into the ERGIC.

Its subcellular location is the cytoplasm. The protein resides in the cytosol. It localises to the secreted. It is found in the lysosome. The protein localises to the extracellular exosome. In terms of biological role, potent pro-inflammatory cytokine. Initially discovered as the major endogenous pyrogen, induces prostaglandin synthesis, neutrophil influx and activation, T-cell activation and cytokine production, B-cell activation and antibody production, and fibroblast proliferation and collagen production. Promotes Th17 differentiation of T-cells. Synergizes with IL12/interleukin-12 to induce IFNG synthesis from T-helper 1 (Th1) cells. Plays a role in angiogenesis by inducing VEGF production synergistically with TNF and IL6. Involved in transduction of inflammation downstream of pyroptosis: its mature form is specifically released in the extracellular milieu by passing through the gasdermin-D (GSDMD) pore. The sequence is that of Interleukin-1 beta (IL1B) from Capra hircus (Goat).